A 520-amino-acid chain; its full sequence is Cyclic AMP-responsive element-binding protein 3-like protein 2 (520 aa).

Topologically, residues 1 to 379 (MEVLESGEQG…KLAGTQTGTC (379 aa)) are cytoplasmic. Position 93 is a phosphoserine (serine 93). Lysine 178 is covalently cross-linked (Glycyl lysine isopeptide (Lys-Gly) (interchain with G-Cter in SUMO2)). Serine 191 is subject to Phosphoserine. The segment at 195-264 (APVDHLHLPP…PHKLQGSGPL (70 aa)) is disordered. 2 stretches are compositionally biased toward low complexity: residues 208–220 (SSHGSDSEGSLSP) and 234–255 (SPSRAAPRAPSALSSSPLLTAP). The bZIP domain occupies 294–357 (ALKKIRRKIK…RTLLQQLQKL (64 aa)). The segment at 296 to 325 (KKIRRKIKNKISAQESRRKKKEYMDSLEKK) is basic motif. The segment at 336 to 357 (LRKKVEVLENTNRTLLQQLQKL) is leucine-zipper. Residues 380 to 400 (LMVVVLCFAVAFGSFFQGYGP) form a helical; Signal-anchor for type II membrane protein membrane-spanning segment. Residues 401–520 (YPSATKMALP…ELDRRVNTTF (120 aa)) lie on the Lumenal side of the membrane. An S1P recognition motif is present at residues 427–430 (RNLL). 3 N-linked (GlcNAc...) asparagine glycosylation sites follow: asparagine 480, asparagine 504, and asparagine 517.

The protein belongs to the bZIP family. ATF subfamily. In terms of assembly, binds DNA as a dimer. Upon ER stress, translocated to the Golgi apparatus, where it is processed by regulated intramembrane proteolysis (RIP) to release the cytosol-facing N-terminal transcription factor domain. The cleavage is performed sequentially by site-1 and site-2 proteases (S1P/MBTPS1 and S2P/MBTPS2). Post-translationally, N-glycosylated. In terms of processing, ubiquitinated by HRD1/SYVN1; undergoes 'Lys-48'-linked ubiquitination, followed by rapid proteasomal degradation under normal conditions. Upon ER stress, SYVN1 E3 ubiquitin-protein ligase dissociates from its substrate, ubiquitination does not occur and CREB3L2 is stabilized. As to expression, widely expressed with highest levels in placenta, lung, spleen and intestine, and lowest levels in heart, brain, skeletal muscle, thymus, colon and leukocytes. In fetal tissues, the weakest expression is detected in brain and heart.

The protein localises to the endoplasmic reticulum membrane. The protein resides in the nucleus. In terms of biological role, transcription factor involved in unfolded protein response (UPR). In the absence of endoplasmic reticulum (ER) stress, inserted into ER membranes, with N-terminal DNA-binding and transcription activation domains oriented toward the cytosolic face of the membrane. In response to ER stress, transported to the Golgi, where it is cleaved in a site-specific manner by resident proteases S1P/MBTPS1 and S2P/MBTPS2. The released N-terminal cytosolic domain is translocated to the nucleus to effect transcription of specific target genes. Plays a critical role in chondrogenesis by activating the transcription of SEC23A, which promotes the transport and secretion of cartilage matrix proteins, and possibly that of ER biogenesis-related genes. In a neuroblastoma cell line, protects cells from ER stress-induced death. In vitro activates transcription of target genes via direct binding to the CRE site. The chain is Cyclic AMP-responsive element-binding protein 3-like protein 2 (CREB3L2) from Homo sapiens (Human).